The following is a 376-amino-acid chain: Respiration factor 1 (376 aa).

4 disordered regions span residues 1-23 (MKDLNPEMGKFATTKGPPQDNRG), 88-107 (VNVTHDESLPLGTIESNSTK), 258-279 (FKEKKKKKKGDVNGNHPETGSS), and 347-376 (GVNELEHNSSNLNNSNSGTPHNHNQNQHTN). Positions 354-376 (NSSNLNNSNSGTPHNHNQNQHTN) are enriched in low complexity.

It is found in the cytoplasm. It localises to the nucleus. The protein localises to the mitochondrion. In terms of biological role, mitochondrial and nuclear transcriptional activator required for respiratory growth. This is Respiration factor 1 (RSF1) from Saccharomyces cerevisiae (strain YJM789) (Baker's yeast).